A 293-amino-acid chain; its full sequence is MSESKAETPSKSAEKGVASLSTSAPPSSTTPTAQAKQTPPPVATTARPMASRLPRTIAAEGGGTEKKQSHLAEDRIAQYLPKQDAVDHSNLAALLQPFTEASYEREFDVKVNGIASKAELTAVAETWASRLNVPKENSAVLAQEIAIHCYHNGSSEQTDFNLKSSQVAGLNLEAAVGVIKEILTLRQFAAYYATFVWNWGIKNEIPPANWVAKGYTDETKYAAFDTFSYVGSPLGLRITPTRKPTNNEYMAASVNAREKIIQSRGKGMVTNSPMFSDGTTHQGIPLHPKLPLS.

Residues 1–14 (MSESKAETPSKSAE) show a composition bias toward basic and acidic residues. Residues 1–49 (MSESKAETPSKSAEKGVASLSTSAPPSSTTPTAQAKQTPPPVATTARPM) are disordered. Positions 18–37 (ASLSTSAPPSSTTPTAQAKQ) are enriched in low complexity.

Belongs to the potexvirus capsid protein family. In terms of assembly, interacts with host NbANKr; this interaction targets the capsid protein to the host chloroplast.

Its subcellular location is the virion. The protein localises to the host chloroplast envelope. In terms of biological role, required for genome encapsidation. Forms ribonucleoprotein complexes along with TGB1 helicase and viral RNA. The protein is Capsid protein (ORF5) of Lolium latent virus (isolate Lolium/USA/US1/-) (LoLV).